A 164-amino-acid chain; its full sequence is Hoefavidin (164 aa).

The first 22 residues, 1-22, serve as a signal peptide directing secretion; it reads MNKVLAIVLTITVAGFAQTAFA. One can recognise an Avidin-like domain in the interval 32 to 155; that stretch reads KLLAGASNWV…GQDDFMQSVA (124 aa). Biotin contacts are provided by Asn-42, Ser-46, Tyr-68, Asn-70, and Gly-76. A disulfide bridge connects residues Cys-77 and Cys-108. Residues Ser-110, Thr-112, and Asp-148 each coordinate biotin.

This sequence belongs to the avidin/streptavidin family. In terms of assembly, exhibits a dynamic oligomeric assembly: the apo form exits as homooctamers, which dissociate into homodimers upon biotin binding. The X-ray structure of the intact hoefavidin reveals unique crystal packing generated by an octameric cylindrical structure wherein the C-terminal segments of each monomer are introduced into the entrance of the biotin-binding site of an adjacent non-canonical monomer.

Its subcellular location is the secreted. Functionally, the exact role played by hoefavidin in the host organism is still obscure. Forms a strong non-covalent complex with biotin and 2-iminobiotin. The chain is Hoefavidin from Hoeflea phototrophica (strain DSM 17068 / NCIMB 14078 / DFL-43).